Reading from the N-terminus, the 855-residue chain is Cell surface glycoprotein (855 aa).

A signal peptide spans Met1–Ala22. N-linked (GlcNAc...) asparagine glycans are attached at residues Asn78, Asn83, Asn108, Asn167, Asn174, Asn187, Asn203, Asn227, Asn230, Asn313, Asn363, Asn441, Asn548, Asn588, Asn608, Asn620, Asn642, Asn656, and Asn754. Positions Glu782–Glu802 are enriched in low complexity. The disordered stretch occupies residues Glu782–Thr831. Residues Glu817–Thr827 are compositionally biased toward acidic residues. Residues Thr831–Val851 traverse the membrane as a helical segment. Residues Pro832–Phe834 carry the PGF sorting signal motif.

This sequence belongs to the halobacterial S-layer protein family. Post-translationally, glycosylated. Cleaved by the archaeosortase ArtA at the C-terminus, with removal of a short hydrophobic segment. In terms of processing, lipidation.

The protein resides in the secreted. Its subcellular location is the cell wall. It is found in the S-layer. It localises to the cell membrane. Its function is as follows. S-layer protein. The S-layer is a paracrystalline mono-layered assembly of proteins which coats the surface of the cell. This Haloferax gibbonsii protein is Cell surface glycoprotein.